Reading from the N-terminus, the 1362-residue chain is Bromodomain-containing protein 4B (1362 aa).

Disordered regions lie at residues 22–57, 200–243, 274–367, 476–639, 699–941, and 953–1349; these read EGAQMSGQQQPAQPQPQTPMMQTPPPEIARPNQPKR, SLGD…HPPA, LANH…DSKT, DEPE…SYEE, CLRK…TQSP, and SQAP…MNFQ. Residues 34–49 show a composition bias toward pro residues; that stretch reads QPQPQTPMMQTPPPEI. Positions 57–163 constitute a Bromo 1 domain; it reads RQTNQLQYLL…KLFLQKISEM (107 aa). Positions 219 to 234 are enriched in pro residues; that stretch reads TPTPPAVIRAPTPPQT. Positions 326 to 342 are enriched in basic and acidic residues; it reads PRKESGRQIRPIKKTEV. The segment covering 348–358 has biased composition (pro residues); the sequence is PAPPDLHPQPA. The 110-residue stretch at 365-474 folds into the Bromo 2 domain; the sequence is SKTSEQLRYC…DVFEMRFAKM (110 aa). Residues 481-503 are compositionally biased toward pro residues; it reads APAPVPSPAPGPPAPSIKIPPPT. The segment at 503 to 521 is NPS region; sequence TSSDTSSDSSSDSESSSDS. Over residues 504–516 the composition is skewed to low complexity; it reads SSDTSSDSSSDSE. A BID region region spans residues 542–597; that stretch reads QLAALSQPQPNKPKKKEREKRKEKHKRKEEVEETRKGRIREPPAKKPKKSVQVSGG. Basic residues predominate over residues 553–568; it reads KPKKKEREKRKEKHKR. Positions 569 to 585 are enriched in basic and acidic residues; it reads KEEVEETRKGRIREPPA. A compositionally biased stretch (pro residues) spans 606–621; it reads PPPVTRPARPAPPPAP. Residues 623 to 707 enclose the NET domain; sequence ESSEEDTQRC…SCLRKKRKPQ (85 aa). A compositionally biased stretch (basic and acidic residues) spans 628-639; sequence DTQRCRPMSYEE. The span at 722 to 737 shows a compositional bias: low complexity; it reads SYSSSESESSSESSTS. The span at 750–766 shows a compositional bias: basic residues; the sequence is QKKKGHSGRESRKHHHP. Composition is skewed to pro residues over residues 772–793 and 871–889; these read IAPPPVMKPPSPTLAPSYPPPS and PARPPSASPPLPPPQPHHQ. Over residues 893–905 the composition is skewed to basic residues; sequence HVHHHHHHHHHAQ. Residues 926–941 are compositionally biased toward polar residues; sequence YLQQLHKSQQPPTQSP. 4 stretches are compositionally biased toward low complexity: residues 953–963, 977–1006, 1014–1028, and 1041–1050; these read SQAPMAAPAQS, SSASPAPSPASSHIHQMQSPPVVPQQQPAG, QQQQQQQQQQHPALQ, and HQQAKQQQVI. A C-terminal (CTD) region region spans residues 1061-1361; sequence RQQKQETYPG…LMEIFEQNLF (301 aa). Residues 1086–1099 are compositionally biased toward pro residues; the sequence is QVPPYPGLTHPPSP. A compositionally biased stretch (basic and acidic residues) spans 1186–1207; the sequence is PEKEKQKQEPKTPVAPKKDLKI. The segment covering 1224–1234 has biased composition (polar residues); it reads PTSAGKSTSDS. Basic and acidic residues predominate over residues 1236–1293; the sequence is ELFRRQAREKEERERALKHQAEQAERMRREQERMRTREDDDVQDQTRKAHEEARRRQE. Over residues 1308–1319 the composition is skewed to low complexity; it reads PAAPSPAQSSQP. Basic and acidic residues predominate over residues 1322–1334; the sequence is DQREMARKREQER.

It belongs to the BET family.

It localises to the nucleus. Its subcellular location is the chromosome. Its function is as follows. Chromatin reader protein that recognizes and binds acetylated histones and plays a key role in transmission of epigenetic memory across cell divisions and transcription regulation. Remains associated with acetylated chromatin throughout the entire cell cycle and provides epigenetic memory for postmitotic G1 gene transcription by preserving acetylated chromatin status and maintaining high-order chromatin structure. During interphase, plays a key role in regulating the transcription of signal-inducible genes by associating with the P-TEFb complex and recruiting it to promoters. This chain is Bromodomain-containing protein 4B (brd4-b), found in Xenopus laevis (African clawed frog).